Reading from the N-terminus, the 204-residue chain is Venom allergen 5 (204 aa).

4 disulfides stabilise this stretch: C4–C17, C8–C101, C26–C94, and C170–C187. Residues 45–189 (LKEHNDFRQK…WHKHYLVCNY (145 aa)) enclose the SCP domain.

It belongs to the CRISP family. Venom allergen 5-like subfamily. Expressed by the venom gland.

Its subcellular location is the secreted. This chain is Venom allergen 5, found in Vespula pensylvanica (Western yellow jacket).